Consider the following 336-residue polypeptide: tRNA N6-adenosine threonylcarbamoyltransferase (336 aa).

Fe cation contacts are provided by histidine 111 and histidine 115. Substrate-binding positions include 134 to 138 (VVSGG), aspartate 167, glycine 180, aspartate 184, and asparagine 272. Fe cation is bound at residue aspartate 300.

It belongs to the KAE1 / TsaD family. It depends on Fe(2+) as a cofactor.

It localises to the cytoplasm. It carries out the reaction L-threonylcarbamoyladenylate + adenosine(37) in tRNA = N(6)-L-threonylcarbamoyladenosine(37) in tRNA + AMP + H(+). Required for the formation of a threonylcarbamoyl group on adenosine at position 37 (t(6)A37) in tRNAs that read codons beginning with adenine. Is involved in the transfer of the threonylcarbamoyl moiety of threonylcarbamoyl-AMP (TC-AMP) to the N6 group of A37, together with TsaE and TsaB. TsaD likely plays a direct catalytic role in this reaction. This chain is tRNA N6-adenosine threonylcarbamoyltransferase, found in Caldicellulosiruptor bescii (strain ATCC BAA-1888 / DSM 6725 / KCTC 15123 / Z-1320) (Anaerocellum thermophilum).